The sequence spans 760 residues: 5-methyltetrahydropteroyltriglutamate--homocysteine methyltransferase (760 aa).

5-methyltetrahydropteroyltri-L-glutamate-binding positions include R17–K20 and K113. L-homocysteine contacts are provided by residues I433–S435 and E486. L-methionine contacts are provided by residues I433–S435 and E486. 5-methyltetrahydropteroyltri-L-glutamate contacts are provided by residues R517–C518 and W563. An L-homocysteine-binding site is contributed by D601. D601 is a binding site for L-methionine. E607 is a 5-methyltetrahydropteroyltri-L-glutamate binding site. 3 residues coordinate Zn(2+): H643, C645, and E667. The active-site Proton donor is H696. C728 serves as a coordination point for Zn(2+).

Belongs to the vitamin-B12 independent methionine synthase family. It depends on Zn(2+) as a cofactor.

The enzyme catalyses 5-methyltetrahydropteroyltri-L-glutamate + L-homocysteine = tetrahydropteroyltri-L-glutamate + L-methionine. It participates in amino-acid biosynthesis; L-methionine biosynthesis via de novo pathway; L-methionine from L-homocysteine (MetE route): step 1/1. Catalyzes the transfer of a methyl group from 5-methyltetrahydrofolate to homocysteine resulting in methionine formation. This is 5-methyltetrahydropteroyltriglutamate--homocysteine methyltransferase from Chromobacterium violaceum (strain ATCC 12472 / DSM 30191 / JCM 1249 / CCUG 213 / NBRC 12614 / NCIMB 9131 / NCTC 9757 / MK).